The following is a 251-amino-acid chain: Insertion sequence IS5376 putative ATP-binding protein (251 aa).

An ATP-binding site is contributed by 105–112; the sequence is GPPGIGKT.

Belongs to the IS21/IS1162 putative ATP-binding protein family.

The protein is Insertion sequence IS5376 putative ATP-binding protein of Geobacillus stearothermophilus (Bacillus stearothermophilus).